We begin with the raw amino-acid sequence, 220 residues long: Metalloproteinase inhibitor 2 (220 aa).

The first 26 residues, 1-26, serve as a signal peptide directing secretion; it reads MGAAARTLRLALGLLLLATLLRPADA. Residue Cys-27 participates in Zn(2+) binding. Involved in metalloproteinase-binding stretches follow at residues 27–30 and 95–96; these read CSCS and SA. 6 disulfide bridges follow: Cys-27–Cys-98, Cys-29–Cys-127, Cys-39–Cys-152, Cys-154–Cys-201, Cys-159–Cys-164, and Cys-172–Cys-193. An NTR domain is found at 27-152; that stretch reads CSCSPVHPQQ…SLNHRYQMGC (126 aa).

It belongs to the protease inhibitor I35 (TIMP) family. In terms of assembly, interacts (via the C-terminal) with MMP2 (via the C-terminal PEX domain); the interaction inhibits the MMP2 activity. In terms of processing, the activity of TIMP2 is dependent on the presence of disulfide bonds.

Its subcellular location is the secreted. Functionally, complexes with metalloproteinases (such as collagenases) and irreversibly inactivates them by binding to their catalytic zinc cofactor. Known to act on MMP-1, MMP-2, MMP-3, MMP-7, MMP-8, MMP-9, MMP-10, MMP-13, MMP-14, MMP-15, MMP-16 and MMP-19. The chain is Metalloproteinase inhibitor 2 (TIMP2) from Homo sapiens (Human).